The sequence spans 843 residues: MSVQPETETGTAAVATEGPEEGTYSFAAMEAKWPQVWEDLKVFTPVDDGSRERRYVLDMFPYPSGDLHMGHAEAFAMGDVVARYLRQKGYDVLHPIGWDSFGLPAENAAIKRNAHPSEWTYANIDTQAASFKRYAISADWSRRLHTSDPEYYRWTQWLFKRFYERGLAYRKDSPVNWCPKDQTVLANEQVVNGACERCGTAVTKKSLNQWYFKITDYADRLLDDMDELRGHWPERVLAMQKNWIGRSEGAHVNFVIEAAGDKPAKDVTVFTTRPDTLYGATFFVVAADAPMAVELVTDEHAAALDAYREQVKALSEIERQSTEREKTGVFTGRYAVNPLNGEKLPVWAADYVLADYGTGAIMAVPAHDQRDLDFARTFDLPVRAVLDTGEDDPAVTGKATAGEGTLINSGVLDGLPKAEAIPTAIDMLEKQGTGEKFVNFRLRDWLLSRQRFWGTPIPIIHCPACGEVPVPDDQLPVTLPADLRGEDLSPKGTSPLAAAEAWVNVECPNCHGPAKRDTDTMDTFVDSSWYFLRFVSPQYTEGPFDPKKINDWMPVGQYVGGVEHAILHLLYARFFTKVIHDLGMIDADEPFSALLNQGQVLNGGKAMSKSLGNGVDLGEQLDKYGVDAVRLTMIFASPPEDDVDWADVSPSGSAKFLARAWRLAQDVSSAPGADAAQGDRALRSVTHRTIADAAALLDSNKFNVVVAKLMELVNATRKTIDAASGAGGADPAVREAAEAVAVILSLFAPYTAEDMWNVLGHPASVANAGWPSHDEALLVQDTVTAVVQVQGKVRDRLEVSPEIGEDELRELALASENVQRALDGRGIRTVIVRAPKLVNIVPA.

Positions 61 to 71 match the 'HIGH' region motif; that stretch reads PYPSGDLHMGH. The 'KMSKS' region signature appears at 606 to 610; that stretch reads AMSKS. K609 is an ATP binding site.

It belongs to the class-I aminoacyl-tRNA synthetase family.

The protein resides in the cytoplasm. The enzyme catalyses tRNA(Leu) + L-leucine + ATP = L-leucyl-tRNA(Leu) + AMP + diphosphate. The polypeptide is Leucine--tRNA ligase (Arthrobacter sp. (strain FB24)).